Reading from the N-terminus, the 267-residue chain is 2-keto-3-deoxy-L-rhamnonate aldolase (267 aa).

His-49 serves as the catalytic Proton acceptor. Substrate is bound at residue Gln-151. Glu-153 contacts Mg(2+). Residues Ala-178 and Asp-179 each contribute to the substrate site. Mg(2+) is bound at residue Asp-179.

The protein belongs to the HpcH/HpaI aldolase family. KDR aldolase subfamily. In terms of assembly, homohexamer. It depends on Mg(2+) as a cofactor. The cofactor is Ni(2+).

The enzyme catalyses 2-dehydro-3-deoxy-L-rhamnonate = (S)-lactaldehyde + pyruvate. The catalysed reaction is D-glyceraldehyde + 3-hydroxypyruvate = (3R,4S,5R)-3,4,5,6-tetrahydroxy-2-oxohexanoate. It carries out the reaction D-glyceraldehyde + 3-hydroxypyruvate = 2-dehydro-D-gluconate. It catalyses the reaction D-glyceraldehyde + 3-hydroxypyruvate = 2-dehydro-D-galactonate. The enzyme catalyses D-glyceraldehyde + pyruvate = 2-dehydro-3-deoxy-L-galactonate. The catalysed reaction is 2-dehydro-3-deoxy-D-gluconate = D-glyceraldehyde + pyruvate. Its function is as follows. Catalyzes the reversible retro-aldol cleavage of 2-keto-3-deoxy-L-rhamnonate (KDR) to pyruvate and lactaldehyde. 2-keto-3-deoxy-L-mannonate, 2-keto-3-deoxy-L-lyxonate and 4-hydroxy-2-ketoheptane-1,7-dioate (HKHD) are also reasonably good substrates, although 2-keto-3-deoxy-L-rhamnonate is likely to be the physiological substrate. In vitro, can catalyze the aldolisation reaction between hydroxypyruvate (HPA) or pyruvate (PA) and D-glyceraldehyde (D-GA). The condensation of hydroxypyruvate and D-glyceraldehyde produces (3R,4S,5R)-3,4,5,6-tetrahydroxy-2-oxohexanoate as the major product, 2-dehydro-D-gluconate and 2-dehydro-D-galactonate. The condensation of pyruvate and D-glyceraldehyde produces 2-dehydro-3-deoxy-L-galactonate as the major product and 2-dehydro-3-deoxy-D-gluconate. In Escherichia coli (strain K12), this protein is 2-keto-3-deoxy-L-rhamnonate aldolase (rhmA).